We begin with the raw amino-acid sequence, 81 residues long: Toxin TdNa10 (81 aa).

The first 20 residues, 1 to 20 (MWTFAIVLAFLLIGLDEGEA), serve as a signal peptide directing secretion. The LCN-type CS-alpha/beta domain occupies 21-81 (LDGYPLSKNN…KMYPGELPCH (61 aa)). Intrachain disulfides connect C32–C80, C36–C57, C42–C62, and C46–C64.

It belongs to the long (4 C-C) scorpion toxin superfamily. Sodium channel inhibitor family. Beta subfamily. Expressed by the venom gland.

It localises to the secreted. Functionally, alpha toxins bind voltage-independently at site-3 of sodium channels (Nav) and inhibit the inactivation of the activated channels, thereby blocking neuronal transmission. This toxin binds, in vitro, to sodium channels and inhibits the inactivation of the activated channels. Seems not toxic to mice, crickets and sweet-water shrimps. This is Toxin TdNa10 from Tityus discrepans (Venezuelan scorpion).